The primary structure comprises 480 residues: Serine carboxypeptidase-like 35 (480 aa).

The signal sequence occupies residues 1–20 (MKKNALWLLCILVLPAIACG). Asn79 and Asn146 each carry an N-linked (GlcNAc...) asparagine glycan. 3 disulfide bridges follow: Cys95-Cys363, Cys257-Cys270, and Cys294-Cys331. Ser188 is a catalytic residue. A glycan (N-linked (GlcNAc...) asparagine) is linked at Asn265. An N-linked (GlcNAc...) asparagine glycan is attached at Asn352. Catalysis depends on residues Asp399 and His452.

It belongs to the peptidase S10 family. As to expression, expressed in seedlings, flowers and siliques.

The protein resides in the secreted. Functionally, probable carboxypeptidase. This is Serine carboxypeptidase-like 35 (SCPL35) from Arabidopsis thaliana (Mouse-ear cress).